Consider the following 807-residue polypeptide: Sucrose synthase 1 (807 aa).

A GT-B glycosyltransferase region spans residues 272–748 (MMFNVVILSP…GLKRIYEKYT (477 aa)).

The protein belongs to the glycosyltransferase 1 family. Plant sucrose synthase subfamily. As to quaternary structure, forms homotetramers. In endosperm it forms both homotetramers and heterotetramers with SS2, all three possible heterotetramers are formed. As to expression, highly expressed in developing endosperm and in roots and, at lower levels, in coleoptiles and aleurone. In 3 day old roots it is detected in cap cells and along the vascular strand, starting just after the meristemic region. In 9 day old leaves it is found in the phloem. In seeds it is distributed throughout the endosperm and also found in the assimilate-unloading tissues, the nucellar projection, the vascular area and at a high concentration in the chalazal region.

It catalyses the reaction an NDP-alpha-D-glucose + D-fructose = a ribonucleoside 5'-diphosphate + sucrose + H(+). Sucrose-cleaving enzyme that provides UDP-glucose and fructose for various metabolic pathways. The chain is Sucrose synthase 1 (SS1) from Hordeum vulgare (Barley).